The sequence spans 426 residues: Enolase (426 aa).

Gly-41 contacts phosphoenolpyruvate. Residue Ser-43 participates in Mg(2+) binding. Glu-165 lines the phosphoenolpyruvate pocket. Positions 165 and 206 each coordinate (2R)-2-phosphoglycerate. Glu-206 serves as the catalytic Proton donor. The Mg(2+) site is built by Asp-243, Glu-286, and Asp-313. Phosphoenolpyruvate-binding residues include Asp-313, Lys-338, Arg-367, Ser-368, and Lys-389. 3 residues coordinate (2R)-2-phosphoglycerate: Lys-338, Arg-367, and Ser-368. Lys-338 acts as the Proton acceptor in catalysis.

It belongs to the enolase family. Homodimer. It depends on Mg(2+) as a cofactor.

It localises to the cytoplasm. The protein localises to the secreted. The protein resides in the cell surface. It catalyses the reaction (2R)-2-phosphoglycerate = phosphoenolpyruvate + H2O. It participates in carbohydrate degradation; glycolysis; pyruvate from D-glyceraldehyde 3-phosphate: step 4/5. In terms of biological role, catalyzes the reversible conversion of 2-phosphoglycerate (2-PG) into phosphoenolpyruvate (PEP). It is essential for the degradation of carbohydrates via glycolysis. The polypeptide is Enolase (Chloroflexus aurantiacus (strain ATCC 29366 / DSM 635 / J-10-fl)).